A 120-amino-acid chain; its full sequence is Ribonuclease P protein component (120 aa).

The protein belongs to the RnpA family. In terms of assembly, consists of a catalytic RNA component (M1 or rnpB) and a protein subunit.

The catalysed reaction is Endonucleolytic cleavage of RNA, removing 5'-extranucleotides from tRNA precursor.. Functionally, RNaseP catalyzes the removal of the 5'-leader sequence from pre-tRNA to produce the mature 5'-terminus. It can also cleave other RNA substrates such as 4.5S RNA. The protein component plays an auxiliary but essential role in vivo by binding to the 5'-leader sequence and broadening the substrate specificity of the ribozyme. This is Ribonuclease P protein component from Microcystis aeruginosa (strain NIES-843 / IAM M-2473).